The following is a 281-amino-acid chain: Bifunctional protein FolD (281 aa).

NADP(+) contacts are provided by residues 165–167 (GRG), Thr192, and Val233.

The protein belongs to the tetrahydrofolate dehydrogenase/cyclohydrolase family. In terms of assembly, homodimer.

The catalysed reaction is (6R)-5,10-methylene-5,6,7,8-tetrahydrofolate + NADP(+) = (6R)-5,10-methenyltetrahydrofolate + NADPH. It carries out the reaction (6R)-5,10-methenyltetrahydrofolate + H2O = (6R)-10-formyltetrahydrofolate + H(+). Its pathway is one-carbon metabolism; tetrahydrofolate interconversion. Catalyzes the oxidation of 5,10-methylenetetrahydrofolate to 5,10-methenyltetrahydrofolate and then the hydrolysis of 5,10-methenyltetrahydrofolate to 10-formyltetrahydrofolate. In Corynebacterium diphtheriae (strain ATCC 700971 / NCTC 13129 / Biotype gravis), this protein is Bifunctional protein FolD.